The sequence spans 149 residues: SsrA-binding protein (149 aa).

Belongs to the SmpB family.

It localises to the cytoplasm. Required for rescue of stalled ribosomes mediated by trans-translation. Binds to transfer-messenger RNA (tmRNA), required for stable association of tmRNA with ribosomes. tmRNA and SmpB together mimic tRNA shape, replacing the anticodon stem-loop with SmpB. tmRNA is encoded by the ssrA gene; the 2 termini fold to resemble tRNA(Ala) and it encodes a 'tag peptide', a short internal open reading frame. During trans-translation Ala-aminoacylated tmRNA acts like a tRNA, entering the A-site of stalled ribosomes, displacing the stalled mRNA. The ribosome then switches to translate the ORF on the tmRNA; the nascent peptide is terminated with the 'tag peptide' encoded by the tmRNA and targeted for degradation. The ribosome is freed to recommence translation, which seems to be the essential function of trans-translation. The sequence is that of SsrA-binding protein from Mesoplasma florum (strain ATCC 33453 / NBRC 100688 / NCTC 11704 / L1) (Acholeplasma florum).